Reading from the N-terminus, the 1127-residue chain is Glutamate receptor-interacting protein 1 (1127 aa).

The S-palmitoyl cysteine moiety is linked to residue Gln11. Ser43 is subject to Phosphoserine. 6 PDZ domains span residues 53–136 (VVEL…EYEL), 150–238 (TVEV…EYDV), 252–336 (LVEV…LPHH), 471–560 (EVVL…EFDV), 572–657 (HVKL…RKDE), and 672–754 (TVEL…KKQT). 3 disordered regions span residues 752-802 (KQTD…PSVD), 840-865 (KQRT…SNED), and 942-980 (MARS…GRKS). Polar residues-rich tracts occupy residues 840-856 (KQRT…SQTY) and 947-973 (LGRQ…NTLP). A PDZ 7 domain is found at 1003-1085 (KVTLYKDSGM…KLDLVISRNP (83 aa)). The segment at 1108-1127 (FFQQPSHGGNLETREPTNTL) is disordered.

Interacts with EFNB3, GRIA2, GRIA3, GRIPAP1/GRASP1, PPFIA1, PPFIA4, FRAS1, PTPRF, liprins-alpha and the C-terminal tail of PRLHR. Can form homomultimers or heteromultimers with GRIP2. Interacts with EFNB1, EPHA7, EPHB2, KIF5A, KIF5B and KIF5C. Forms a ternary complex with GRIA2 and CSPG4. Interacts with ATAD1 in an ATP-dependent manner. ATAD1-catalyzed ATP hydrolysis disrupts binding to ATAD1 and to GRIA2 and leads to AMPAR complex disassembly. Interacts with SLC30A9 and PLCD4. Interacts with BUD23. Forms a complex with NSG1, GRIA2 and STX12; controls the intracellular fate of AMPAR and the endosomal sorting of the GRIA2 subunit toward recycling and membrane targeting. Interacts with NSG1. In terms of processing, palmitoylation of isoform 2. In terms of tissue distribution, expressed in brain. Isoform 2 is the major isoform in brain. Expressed in oligodendrocyte lineage cells.

The protein localises to the membrane. Its subcellular location is the cytoplasmic vesicle. It localises to the perikaryon. The protein resides in the cell projection. It is found in the dendrite. The protein localises to the cytoplasm. Its subcellular location is the endomembrane system. It localises to the postsynaptic cell membrane. The protein resides in the postsynaptic density. It is found in the endoplasmic reticulum membrane. In terms of biological role, may play a role as a localized scaffold for the assembly of a multiprotein signaling complex and as mediator of the trafficking of its binding partners at specific subcellular location in neurons. Through complex formation with NSG1, GRIA2 and STX12 controls the intracellular fate of AMPAR and the endosomal sorting of the GRIA2 subunit toward recycling and membrane targeting. The chain is Glutamate receptor-interacting protein 1 (Grip1) from Mus musculus (Mouse).